We begin with the raw amino-acid sequence, 537 residues long: Cytochrome P450 734A5 (537 aa).

A helical transmembrane segment spans residues 13-33 (GAAAVAVAAAAAWVAVYAAAA). A heme-binding site is contributed by cysteine 480.

Belongs to the cytochrome P450 family. The cofactor is heme. In terms of tissue distribution, exclusively expressed in roots.

Its subcellular location is the membrane. Its function is as follows. Cytochrome P450 probably involved in brassinosteroids (BRs) inactivation and regulation of BRs homeostasis. The protein is Cytochrome P450 734A5 (CYP734A5) of Oryza sativa subsp. japonica (Rice).